The following is an 81-amino-acid chain: Putative defensin-like protein 148 (81 aa).

The first 24 residues, 1-24 (MIKSFQLSFTVLIVFTVLILGVVG), serve as a signal peptide directing secretion. Disulfide bonds link cysteine 34–cysteine 80, cysteine 43–cysteine 63, cysteine 48–cysteine 74, and cysteine 52–cysteine 76.

Belongs to the DEFL family.

Its subcellular location is the secreted. The protein is Putative defensin-like protein 148 (LCR4) of Arabidopsis thaliana (Mouse-ear cress).